The chain runs to 201 residues: Probable GTP-binding protein EngB (201 aa).

In terms of domain architecture, EngB-type G spans Ser-22–Tyr-195. GTP-binding positions include Gly-30–Ser-37, Gly-57–Thr-61, Asp-75–Gly-78, Thr-142–Asp-145, and Tyr-174–Ser-176. Residues Ser-37 and Thr-59 each coordinate Mg(2+).

It belongs to the TRAFAC class TrmE-Era-EngA-EngB-Septin-like GTPase superfamily. EngB GTPase family. Requires Mg(2+) as cofactor.

In terms of biological role, necessary for normal cell division and for the maintenance of normal septation. The protein is Probable GTP-binding protein EngB of Finegoldia magna (strain ATCC 29328 / DSM 20472 / WAL 2508) (Peptostreptococcus magnus).